Reading from the N-terminus, the 421-residue chain is AP-3 complex subunit mu (421 aa).

One can recognise an MHD domain in the interval 178 to 420 (QNKIFFDIIE…TTKAGKFQVR (243 aa)).

The protein belongs to the adaptor complexes medium subunit family. In terms of assembly, adaptor protein complex 3 (AP-3) is a heterotetramer composed of two large adaptins (delta-type subunit and beta-type subunit), a medium adaptin (mu-type subunit) and a small adaptin (sigma-type subunit).

The protein localises to the endosome membrane. Functionally, part of the AP-3 complex, an adaptor-related complex which is essential for the compartmentalization of the endocytic pathway. This chain is AP-3 complex subunit mu (apm3), found in Dictyostelium discoideum (Social amoeba).